We begin with the raw amino-acid sequence, 512 residues long: GMP synthase [glutamine-hydrolyzing] (512 aa).

In terms of domain architecture, Glutamine amidotransferase type-1 spans 3–196 (NILILDFGSQ…VKHICQTSET (194 aa)). Residue Cys80 is the Nucleophile of the active site. Residues His169 and Glu171 contribute to the active site. In terms of domain architecture, GMPS ATP-PPase spans 197 to 387 (WKIETIEKQL…LGLPDVLISR (191 aa)). 225 to 231 (SGGVDSS) is a binding site for ATP.

In terms of assembly, homodimer.

The catalysed reaction is XMP + L-glutamine + ATP + H2O = GMP + L-glutamate + AMP + diphosphate + 2 H(+). The protein operates within purine metabolism; GMP biosynthesis; GMP from XMP (L-Gln route): step 1/1. Its function is as follows. Catalyzes the synthesis of GMP from XMP. The polypeptide is GMP synthase [glutamine-hydrolyzing] (guaA) (Chlamydia muridarum (strain MoPn / Nigg)).